Consider the following 398-residue polypeptide: MAKEKYDRSKPHVNIGTIGHVDHGKTTLTAAITTVLARRLPSSVNQPKDYASIDAAPEERERGITINTAHVEYETATRHYAHIDAPGHADYVKNMITGAAQMDGAILVVASTDGPMPQTREHILLSRQVGVKHLIVFMNKVDLVDDEELLELVEMEIRDLLSEYDFPGDDLPVIQGSALKALEGDTKFEDIIMELMDTVDSYIPEPERDTDKPLLLPVEDVFSITGRGTVASGRIDRGTVRVNDEIEIVGIKEETKKAVVTGVEMFRKQLDEGLAGDNVGILLRGVQRDEIERGQVIAKPSSINPHTKFKGEVYILSKDEGGRHTPFFNNYRPQFYFRTTDVTGSIELPAGTEMVMPGDNVTINVELIHPIAVEQGTTFSIREGGRTVGSGIVSEIEA.

The 198-residue stretch at 10 to 207 folds into the tr-type G domain; it reads KPHVNIGTIG…TVDSYIPEPE (198 aa). Residues 19-26 are G1; sequence GHVDHGKT. Residue 19-26 participates in GTP binding; sequence GHVDHGKT. Mg(2+) is bound at residue T26. Residues 63 to 67 are G2; the sequence is GITIN. Residues 84–87 are G3; sequence DAPG. GTP-binding positions include 84–88 and 139–142; these read DAPGH and NKVD. Positions 139–142 are G4; sequence NKVD. Positions 177 to 179 are G5; it reads SAL.

It belongs to the TRAFAC class translation factor GTPase superfamily. Classic translation factor GTPase family. EF-Tu/EF-1A subfamily. Monomer.

The protein resides in the cytoplasm. It catalyses the reaction GTP + H2O = GDP + phosphate + H(+). GTP hydrolase that promotes the GTP-dependent binding of aminoacyl-tRNA to the A-site of ribosomes during protein biosynthesis. In Streptococcus pyogenes serotype M1, this protein is Elongation factor Tu.